The chain runs to 812 residues: Valine--tRNA ligase (812 aa).

The 'HIGH' region signature appears at 46–56 (PTVSGQLHIGH). A 'KMSKS' region motif is present at residues 536-540 (KMSKS). Lys-539 lines the ATP pocket.

This sequence belongs to the class-I aminoacyl-tRNA synthetase family. ValS type 2 subfamily. Monomer.

Its subcellular location is the cytoplasm. It carries out the reaction tRNA(Val) + L-valine + ATP = L-valyl-tRNA(Val) + AMP + diphosphate. Catalyzes the attachment of valine to tRNA(Val). As ValRS can inadvertently accommodate and process structurally similar amino acids such as threonine, to avoid such errors, it has a 'posttransfer' editing activity that hydrolyzes mischarged Thr-tRNA(Val) in a tRNA-dependent manner. The polypeptide is Valine--tRNA ligase (Rickettsia bellii (strain OSU 85-389)).